The following is a 209-amino-acid chain: Large ribosomal subunit protein uL3 (209 aa).

The segment at 132–153 (ATHGNSLSHRVPGSIGQNQTPG) is disordered. Q150 is subject to N5-methylglutamine.

This sequence belongs to the universal ribosomal protein uL3 family. As to quaternary structure, part of the 50S ribosomal subunit. Forms a cluster with proteins L14 and L19. Post-translationally, methylated by PrmB.

In terms of biological role, one of the primary rRNA binding proteins, it binds directly near the 3'-end of the 23S rRNA, where it nucleates assembly of the 50S subunit. The chain is Large ribosomal subunit protein uL3 from Erwinia tasmaniensis (strain DSM 17950 / CFBP 7177 / CIP 109463 / NCPPB 4357 / Et1/99).